The sequence spans 70 residues: MENMNMNKELIQQQTDKLEYYYNLMLEKLCNMVIASNASEVHEITRSFCEVLSDYKKYTDGKNIFNSYTE.

This is an uncharacterized protein from Dictyostelium discoideum (Social amoeba).